A 51-amino-acid polypeptide reads, in one-letter code: Defensin-like protein 1 (51 aa).

At Gln-1 the chain carries Pyrrolidone carboxylic acid. Disulfide bonds link Cys-4–Cys-51, Cys-15–Cys-36, Cys-21–Cys-45, and Cys-25–Cys-47.

As to quaternary structure, forms oligomers in its native state.

Functionally, possesses antifungal activity sensitive to inorganic cations. This Sinapis alba (White mustard) protein is Defensin-like protein 1.